Consider the following 452-residue polypeptide: Keratin, type II cytoskeletal 80 (452 aa).

The tract at residues 1–82 (MACRSCVVGF…DPAVQQLKNQ (82 aa)) is head. Residue Ser45 is modified to Phosphoserine. Residues 82 to 118 (QEKEEMKALNDKFASLIGKVQALEQRNQLLETRWSFL) form a coil 1A region. An IF rod domain is found at 83–394 (EKEEMKALND…KLVEGEEGRM (312 aa)). The tract at residues 119-135 (QGQDSAIFDLGHLYEEY) is linker 1. A coil 1B region spans residues 136 to 227 (QGRLQEELRK…TIYEQELKDL (92 aa)). Residues 228–251 (AAQVKDVSVTVGMDSRCHIDLSGI) are linker 12. The coil 2 stretch occupies residues 252 to 390 (VEEVKAQYDA…ATYRKLVEGE (139 aa)). Residues 391 to 452 (EGRMDSPSAT…YFSQESEVSE (62 aa)) form a tail region. Residue Ser396 is modified to Phosphoserine. The interval 412-434 (AASRSGLSKAPSRKKKGSKGPVI) is disordered.

Belongs to the intermediate filament family. Heterotetramer of two type I and two type II keratins. Weakly expressed in tongue, but not skin or in any other tissues or organs examined.

In Homo sapiens (Human), this protein is Keratin, type II cytoskeletal 80 (KRT80).